We begin with the raw amino-acid sequence, 427 residues long: Serine hydroxymethyltransferase (427 aa).

Residues Leu122 and 126-128 contribute to the (6S)-5,6,7,8-tetrahydrofolate site; that span reads GHL. Lys231 is subject to N6-(pyridoxal phosphate)lysine. Residues Glu247 and 355-357 contribute to the (6S)-5,6,7,8-tetrahydrofolate site; that span reads SPF.

Belongs to the SHMT family. In terms of assembly, homodimer. It depends on pyridoxal 5'-phosphate as a cofactor.

Its subcellular location is the cytoplasm. The enzyme catalyses (6R)-5,10-methylene-5,6,7,8-tetrahydrofolate + glycine + H2O = (6S)-5,6,7,8-tetrahydrofolate + L-serine. Its pathway is one-carbon metabolism; tetrahydrofolate interconversion. The protein operates within amino-acid biosynthesis; glycine biosynthesis; glycine from L-serine: step 1/1. In terms of biological role, catalyzes the reversible interconversion of serine and glycine with tetrahydrofolate (THF) serving as the one-carbon carrier. This reaction serves as the major source of one-carbon groups required for the biosynthesis of purines, thymidylate, methionine, and other important biomolecules. Also exhibits THF-independent aldolase activity toward beta-hydroxyamino acids, producing glycine and aldehydes, via a retro-aldol mechanism. The polypeptide is Serine hydroxymethyltransferase (Synechocystis sp. (strain ATCC 27184 / PCC 6803 / Kazusa)).